We begin with the raw amino-acid sequence, 145 residues long: D-aminoacyl-tRNA deacylase (145 aa).

Residues 137–138 carry the Gly-cisPro motif, important for rejection of L-amino acids motif; that stretch reads GP.

It belongs to the DTD family. As to quaternary structure, homodimer.

It localises to the cytoplasm. The catalysed reaction is glycyl-tRNA(Ala) + H2O = tRNA(Ala) + glycine + H(+). It carries out the reaction a D-aminoacyl-tRNA + H2O = a tRNA + a D-alpha-amino acid + H(+). An aminoacyl-tRNA editing enzyme that deacylates mischarged D-aminoacyl-tRNAs. Also deacylates mischarged glycyl-tRNA(Ala), protecting cells against glycine mischarging by AlaRS. Acts via tRNA-based rather than protein-based catalysis; rejects L-amino acids rather than detecting D-amino acids in the active site. By recycling D-aminoacyl-tRNA to D-amino acids and free tRNA molecules, this enzyme counteracts the toxicity associated with the formation of D-aminoacyl-tRNA entities in vivo and helps enforce protein L-homochirality. The chain is D-aminoacyl-tRNA deacylase from Shewanella amazonensis (strain ATCC BAA-1098 / SB2B).